We begin with the raw amino-acid sequence, 297 residues long: Probable E3 SUMO-protein ligase RNF212 (297 aa).

The RING-type zinc finger occupies 7–46; it reads CNRCFQPPHRTSCFSLTNCGHVYCDACLGKGKKNECLICK. Residues 91 to 124 are a coiled coil; sequence RKRLLAFYREKISRLEESLRKSVLQIEQLQSMRS.

The protein localises to the nucleus. It localises to the chromosome. The protein operates within protein modification; protein sumoylation. SUMO E3 ligase that acts as a regulator of crossing-over during meiosis: required to couple chromosome synapsis to the formation of crossover-specific recombination complexes. Localizes to recombination sites and stabilizes meiosis-specific recombination factors, such as MutS-gamma complex proteins (MSH4 and MSH5) and TEX11. May mediate sumoylation of target proteins MSH4 and/or MSH5, leading to enhance their binding to recombination sites. Acts as a limiting factor for crossover designation and/or reinforcement and plays an antagonist role with CCNB1IP1/HEI10 in the regulation of meiotic recombination. In Homo sapiens (Human), this protein is Probable E3 SUMO-protein ligase RNF212 (RNF212).